The primary structure comprises 539 residues: Carboxypeptidase Y homolog A (539 aa).

Residues methionine 1–valine 17 form the signal peptide. Positions proline 18–lysine 122 are excised as a propeptide. Intrachain disulfides connect cysteine 176/cysteine 416, cysteine 310/cysteine 324, cysteine 334/cysteine 357, cysteine 341/cysteine 350, and cysteine 379/cysteine 386. The N-linked (GlcNAc...) asparagine glycan is linked to asparagine 207. Serine 263 is a catalytic residue. Aspartate 455 is an active-site residue. Asparagine 506 carries an N-linked (GlcNAc...) asparagine glycan. Residue histidine 517 is part of the active site.

Belongs to the peptidase S10 family.

The protein resides in the vacuole. It catalyses the reaction Release of a C-terminal amino acid with broad specificity.. In terms of biological role, vacuolar carboxypeptidase involved in degradation of small peptides. Digests preferentially peptides containing an aliphatic or hydrophobic residue in P1' position, as well as methionine, leucine or phenylalanine in P1 position of ester substrate. This chain is Carboxypeptidase Y homolog A (cpyA), found in Coccidioides posadasii (strain C735) (Valley fever fungus).